The primary structure comprises 742 residues: Enhancer of polycomb-like protein 1 (742 aa).

Over residues 1–27 (MPTPSAQLDQGIISSNGGTSGVSASST) the composition is skewed to polar residues. Disordered regions lie at residues 1 to 28 (MPTPSAQLDQGIISSNGGTSGVSASSTR), 416 to 446 (RQQSQLQKLDQQQRQQQQQQQPQINGAQCQQ), and 718 to 742 (KKLVNAQRQQQQQQQEQQEQEHQQA). Positions 724 to 734 (QRQQQQQQQEQ) are enriched in low complexity.

It belongs to the enhancer of polycomb family. Component of the NuA4 histone acetyltransferase complex.

The protein localises to the nucleus. Component of the NuA4 histone acetyltransferase complex which is involved in transcriptional activation of selected genes principally by acetylation of nucleosomal histone H4 and H2A. The NuA4 complex is also involved in DNA repair. Involved in gene silencing by neighboring heterochromatin, blockage of the silencing spreading along the chromosome, and required for cell cycle progression through G2/M. The sequence is that of Enhancer of polycomb-like protein 1 (EPL1) from Eremothecium gossypii (strain ATCC 10895 / CBS 109.51 / FGSC 9923 / NRRL Y-1056) (Yeast).